The sequence spans 484 residues: Ribonuclease Y (484 aa).

The chain crosses the membrane as a helical span at residues 18–38 (FFAFLFLIIIAFNLCLFAYLY). Residues 166–234 (SPSFLISESD…LTVRNILMND (69 aa)) form the KH domain. Residues 293–385 (VLSHSLETAF…TQIADKLSAA (93 aa)) enclose the HD domain.

Belongs to the RNase Y family.

It is found in the cell membrane. Functionally, endoribonuclease that initiates mRNA decay. This Mycoplasma genitalium (strain ATCC 33530 / DSM 19775 / NCTC 10195 / G37) (Mycoplasmoides genitalium) protein is Ribonuclease Y.